A 1739-amino-acid chain; its full sequence is Gag-Pol polyprotein (1739 aa).

Residue Gly2 is the site of N-myristoyl glycine; by host attachment. Residues Pro111–Pro127 show a composition bias toward pro residues. Positions Pro111–Gly222 are disordered. Residues Pro112–Pro115 carry the PTAP/PSAP motif motif. Positions Leu131–Leu135 match the LYPX(n)L motif motif. A PPXY motif motif is present at residues Pro163 to Tyr166. Ser193 carries the post-translational modification Phosphoserine; by host. The tract at residues Gly346–Val394 is interaction with host PIAS4. The interval Ile431–Glu436 is interaction with host UBE2I. Basic and acidic residues-rich tracts occupy residues Arg435–Arg467 and Arg487–Leu500. 2 disordered regions span residues Arg435–Leu500 and Trp514–Ile553. Residues Glu439–Leu479 adopt a coiled-coil conformation. Residues Asp503–Lys520 form a CCHC-type zinc finger. The region spanning Val562–Leu632 is the Peptidase A2 domain. Asp567 (protease; shared with dimeric partner) is an active-site residue. The region spanning Leu742–Leu933 is the Reverse transcriptase domain. Mg(2+) is bound by residues Asp810, Asp884, Asp885, Asp1184, Glu1222, Asp1243, and Asp1313. The RNase H type-1 domain occupies Pro1175–Thr1321. The HHCC-type zinc finger occupies His1388–Cys1428. The region spanning Arg1445–Pro1603 is the Integrase catalytic domain. Mg(2+) contacts are provided by Asp1456 and Asp1515.

Belongs to the retroviral Pol polyprotein family. Homohexamer; further associates as homomultimer. The virus core is composed of a lattice formed from hexagonal rings, each containing six capsid monomers. In terms of assembly, interacts (via PPXY motif) with host NEDD4. Interacts (via PSAP motif) with host TSG101. Interacts (via LYPX(n)L motif) with host PDCD6IP. As to quaternary structure, the reverse transcriptase is a monomer (Potential). Interacts (via RNase domains) with host release factor ETF1; this interaction is essential for translational readthrough of amber codon between viral gag and pol genes, as well as for viral replication. Homodimer. It depends on Mg(2+) as a cofactor. Post-translationally, ubiquitinated by ITCH. Gag can recruit the ubiquitin ligase Itch in an L domain-independent manner to facilitate virus release via a mechanism that involves Gag ubiquitination. In terms of processing, specific enzymatic cleavages by the viral protease yield mature proteins. The protease is released by autocatalytic cleavage. The polyprotein is cleaved during and after budding, this process is termed maturation. Sumoylated; which is required for virus replication. Post-translationally, phosphorylated on serine residues.

Its subcellular location is the virion. It is found in the host cell membrane. It localises to the host late endosome membrane. The protein localises to the host endosome. The protein resides in the host multivesicular body. Its subcellular location is the host cytoplasm. It catalyses the reaction DNA(n) + a 2'-deoxyribonucleoside 5'-triphosphate = DNA(n+1) + diphosphate. The enzyme catalyses Endonucleolytic cleavage to 5'-phosphomonoester.. Its activity is regulated as follows. Most efficiently inhibited by Amprenavir, which is able to block Gag-Pol processing in infected cells. Its function is as follows. Plays a role in budding and is processed by the viral protease during virion maturation outside the cell. During budding, it recruits, in a PPXY-dependent or independent manner, Nedd4-like ubiquitin ligases that conjugate ubiquitin molecules to Gag-Pol, or to Gag-Pol binding host factors. Interaction with HECT ubiquitin ligases probably links the viral protein to the host ESCRT pathway and facilitates release. Functionally, targets Gag and gag-pol polyproteins to the plasma membrane via a multipartite membrane binding signal, that includes its myristoylated N-terminus. Also mediates nuclear localization of the pre-integration complex. In terms of biological role, constituent of the pre-integration complex (PIC) which tethers the latter to mitotic chromosomes. This allows the integration of the viral genome into the host DNA. Forms the spherical core of the virion that encapsulates the genomic RNA-nucleocapsid complex. Its function is as follows. Involved in the packaging and encapsidation of two copies of the genome. Binds with high affinity to conserved UCUG elements within the packaging signal, located near the 5'-end of the genome. This binding is dependent on genome dimerization. Acts as a nucleic acid chaperone which is involved in rearrangement of nucleic acid secondary structures during gRNA retrotranscription. Functionally, the aspartyl protease mediates proteolytic cleavages of Gag and Gag-Pol polyproteins during or shortly after the release of the virion from the plasma membrane. Cleavages take place as an ordered, step-wise cascade to yield mature proteins. This process is called maturation. Displays maximal activity during the budding process just prior to particle release from the cell (Potential). Cleaves the translation initiation factor eIF4G leading to the inhibition of host cap-dependent translation. In terms of biological role, RT is a multifunctional enzyme that converts the viral dimeric RNA genome into dsDNA in the cytoplasm, shortly after virus entry into the cell. This enzyme displays a DNA polymerase activity that can copy either DNA or RNA templates, and a ribonuclease H (RNase H) activity that cleaves the RNA strand of RNA-DNA heteroduplexes in a partially processive 3' to 5' endonucleasic mode. Conversion of viral genomic RNA into dsDNA requires many steps. A tRNA binds to the primer-binding site (PBS) situated at the 5' end of the viral RNA. RT uses the 3' end of the tRNA primer to perform a short round of RNA-dependent minus-strand DNA synthesis. The reading proceeds through the U5 region and ends after the repeated (R) region which is present at both ends of viral RNA. The portion of the RNA-DNA heteroduplex is digested by the RNase H, resulting in a ssDNA product attached to the tRNA primer. This ssDNA/tRNA hybridizes with the identical R region situated at the 3' end of viral RNA. This template exchange, known as minus-strand DNA strong stop transfer, can be either intra- or intermolecular. RT uses the 3' end of this newly synthesized short ssDNA to perform the RNA-dependent minus-strand DNA synthesis of the whole template. RNase H digests the RNA template except for a polypurine tract (PPT) situated at the 5' end of the genome. It is not clear if both polymerase and RNase H activities are simultaneous. RNase H probably can proceed both in a polymerase-dependent (RNA cut into small fragments by the same RT performing DNA synthesis) and a polymerase-independent mode (cleavage of remaining RNA fragments by free RTs). Secondly, RT performs DNA-directed plus-strand DNA synthesis using the PPT that has not been removed by RNase H as primers. PPT and tRNA primers are then removed by RNase H. The 3' and 5' ssDNA PBS regions hybridize to form a circular dsDNA intermediate. Strand displacement synthesis by RT to the PBS and PPT ends produces a blunt ended, linear dsDNA copy of the viral genome that includes long terminal repeats (LTRs) at both ends. Catalyzes viral DNA integration into the host chromosome, by performing a series of DNA cutting and joining reactions. This enzyme activity takes place after virion entry into a cell and reverse transcription of the RNA genome in dsDNA. The first step in the integration process is 3' processing. This step requires a complex comprising the viral genome, matrix protein and integrase. This complex is called the pre-integration complex (PIC). The integrase protein removes 2 nucleotides from each 3' end of the viral DNA, leaving recessed CA OH's at the 3' ends. In the second step that requires cell division, the PIC enters cell nucleus. In the third step, termed strand transfer, the integrase protein joins the previously processed 3' ends to the 5' ends of strands of target cellular DNA at the site of integration. The last step is viral DNA integration into host chromosome. This Mus musculus (Mouse) protein is Gag-Pol polyprotein (pol).